A 303-amino-acid chain; its full sequence is Probable aspartoacylase (303 aa).

The Zn(2+) site is built by His-13 and Glu-16. Substrate is bound by residues Arg-55 and 62-63 (NR). Residue His-104 coordinates Zn(2+). Positions 162 and 273 each coordinate substrate.

This sequence belongs to the AspA/AstE family. Aspartoacylase subfamily. Zn(2+) is required as a cofactor.

The catalysed reaction is an N-acyl-L-aspartate + H2O = a carboxylate + L-aspartate. The polypeptide is Probable aspartoacylase (Parasynechococcus marenigrum (strain WH8102)).